Consider the following 21-residue polypeptide: Formate ester dehydrogenase beta chain (21 aa).

As to quaternary structure, heterotrimer composed of an alpha, a beta and a gamma chain.

This Amycolatopsis methanolica protein is Formate ester dehydrogenase beta chain.